Consider the following 226-residue polypeptide: Glutathione peroxidase 3 (226 aa).

The first 24 residues, 1–24, serve as a signal peptide directing secretion; that stretch reads MARLLQASCLLSLLLAGFLPQSRG. Residue Sec-73 is part of the active site. Residue Sec-73 is a non-standard amino acid, selenocysteine.

Belongs to the glutathione peroxidase family. In terms of assembly, homotetramer. As to expression, secreted in plasma.

It is found in the secreted. It catalyses the reaction 2 glutathione + H2O2 = glutathione disulfide + 2 H2O. It carries out the reaction tert-butyl hydroperoxide + 2 glutathione = tert-butanol + glutathione disulfide + H2O. Protects cells and enzymes from oxidative damage, by catalyzing the reduction of hydrogen peroxide, lipid peroxides and organic hydroperoxide, by glutathione. This is Glutathione peroxidase 3 from Sapajus apella (Brown-capped capuchin).